Here is a 1143-residue protein sequence, read N- to C-terminus: Exportin-T (1143 aa).

The interval 566-593 (ARNKLRAAQGSGRTTPSSSDNVDLGPSS) is disordered. Residues 576–593 (SGRTTPSSSDNVDLGPSS) are compositionally biased toward polar residues.

Belongs to the exportin family.

It is found in the nucleus. Its subcellular location is the cytoplasm. TRNA nucleus export receptor which facilitates tRNA translocation across the nuclear pore complex. Involved in pre-tRNA splicing, probably by affecting the interaction of pre-tRNA with splicing endonuclease. This Cryptococcus neoformans var. neoformans serotype D (strain JEC21 / ATCC MYA-565) (Filobasidiella neoformans) protein is Exportin-T (LOS1).